Here is a 210-residue protein sequence, read N- to C-terminus: 23.6 kDa heat shock protein, mitochondrial (210 aa).

The N-terminal 31 residues, 1–31 (MASALALKRLLSSSIAPRSRSVLRPAVSSRL), are a transit peptide targeting the mitochondrion. In terms of domain architecture, sHSP spans 100–210 (MGASGARRGW…RNDVRQIEIN (111 aa)). The segment at 145 to 165 (GEGKNEEDGGEEGESGNRRFT) is disordered.

It belongs to the small heat shock protein (HSP20) family. As to quaternary structure, may form oligomeric structures.

It localises to the mitochondrion. In Arabidopsis thaliana (Mouse-ear cress), this protein is 23.6 kDa heat shock protein, mitochondrial (HSP23.6).